The following is a 336-amino-acid chain: CMP-sialic acid transporter (336 aa).

At Met1–Ser9 the chain is on the cytoplasmic side. The chain crosses the membrane as a helical span at residues Leu10–Ala30. The Lumenal portion of the chain corresponds to Leu31–Thr45. The helical transmembrane segment at Thr46–Ala64 threads the bilayer. Lys55 contributes to the CMP-N-acetyl-beta-neuraminate binding site. At Lys65–Glu87 the chain is on the cytoplasmic side. A helical membrane pass occupies residues Leu88–Ala108. CMP-N-acetyl-beta-neuraminate is bound at residue Gln101–Asn102. Residues Leu109–Ala114 are Lumenal-facing. A helical membrane pass occupies residues Ala115–Met135. Tyr117–Lys124 serves as a coordination point for CMP-N-acetyl-beta-neuraminate. Over Leu136 to Ser141 the chain is Cytoplasmic. Residues Lys142 to Trp160 traverse the membrane as a helical segment. The Lumenal portion of the chain corresponds to Lys161–Leu175. The chain crosses the membrane as a helical span at residues Leu176 to Glu196. Ser188 lines the CMP-N-acetyl-beta-neuraminate pocket. At Lys197–Arg209 the chain is on the cytoplasmic side. Residue Asn210–Tyr214 participates in CMP-N-acetyl-beta-neuraminate binding. A helical transmembrane segment spans residues Asn210–Ser228. Topologically, residues Asp229 to Thr243 are lumenal. Residues Tyr244–Val262 traverse the membrane as a helical segment. At Val263–Asn269 the chain is on the cytoplasmic side. The chain crosses the membrane as a helical span at residues Ile270–Val288. Residue Lys272 participates in CMP-N-acetyl-beta-neuraminate binding. Over Leu289 to Thr296 the chain is Lumenal. A helical membrane pass occupies residues Leu297 to Leu315. Residues Pro316–Val336 lie on the Cytoplasmic side of the membrane. The tract at residues Pro316 to Val336 is disordered.

This sequence belongs to the nucleotide-sugar transporter family. SLC35A subfamily. As to quaternary structure, monomer. In terms of tissue distribution, ubiquitous. Found in all the tissues examined including skeletal muscle, brain, heart, liver, kidney and spleen.

It localises to the golgi apparatus membrane. The enzyme catalyses CMP-N-acetyl-beta-neuraminate(in) + CMP(out) = CMP-N-acetyl-beta-neuraminate(out) + CMP(in). The catalysed reaction is CMP-N-acetyl-beta-neuraminate(in) + AMP(out) = CMP-N-acetyl-beta-neuraminate(out) + AMP(in). It catalyses the reaction CDP-L-ribitol(in) + CDP(out) = CDP-L-ribitol(out) + CDP(in). It carries out the reaction UMP(out) + CMP-N-acetyl-beta-neuraminate(in) = UMP(in) + CMP-N-acetyl-beta-neuraminate(out). In terms of biological role, transports CMP-sialic acid from the cytosol into the Golgi apparatus, functioning as an antiporter that exchanges CMP-sialic acid for CMP. Binds both CMP-sialic acid and free CMP, but has higher affinity for free CMP. Also able to exchange CMP-sialic acid for AMP and UMP. Also mediates the transport of CDP-ribitol. This is CMP-sialic acid transporter from Mus musculus (Mouse).